Here is a 346-residue protein sequence, read N- to C-terminus: UDP-N-acetylenolpyruvoylglucosamine reductase (346 aa).

An FAD-binding PCMH-type domain is found at Leu-18 to His-189. Arg-165 is an active-site residue. The Proton donor role is filled by Ser-240. Glu-336 is a catalytic residue.

This sequence belongs to the MurB family. FAD serves as cofactor.

Its subcellular location is the cytoplasm. It catalyses the reaction UDP-N-acetyl-alpha-D-muramate + NADP(+) = UDP-N-acetyl-3-O-(1-carboxyvinyl)-alpha-D-glucosamine + NADPH + H(+). It functions in the pathway cell wall biogenesis; peptidoglycan biosynthesis. Cell wall formation. The chain is UDP-N-acetylenolpyruvoylglucosamine reductase from Neisseria gonorrhoeae (strain ATCC 700825 / FA 1090).